The primary structure comprises 202 residues: Probable nicotinate-nucleotide adenylyltransferase (202 aa).

The protein belongs to the NadD family.

The catalysed reaction is nicotinate beta-D-ribonucleotide + ATP + H(+) = deamido-NAD(+) + diphosphate. It functions in the pathway cofactor biosynthesis; NAD(+) biosynthesis; deamido-NAD(+) from nicotinate D-ribonucleotide: step 1/1. Catalyzes the reversible adenylation of nicotinate mononucleotide (NaMN) to nicotinic acid adenine dinucleotide (NaAD). The sequence is that of Probable nicotinate-nucleotide adenylyltransferase from Synechococcus sp. (strain JA-2-3B'a(2-13)) (Cyanobacteria bacterium Yellowstone B-Prime).